Reading from the N-terminus, the 74-residue chain is U3-agatoxin-Ao1f (74 aa).

The first 20 residues, 1-20, serve as a signal peptide directing secretion; the sequence is MRAIISLLLISTMVFGVIEA. Positions 21–34 are excised as a propeptide; it reads VSLEEGLKIFEGER. Disulfide bonds link Cys37-Cys53, Cys44-Cys58, Cys52-Cys68, and Cys60-Cys66. Asn72 carries the post-translational modification Asparagine amide.

The protein belongs to the neurotoxin 07 (Beta/delta-agtx) family. 03 (aga-4) subfamily. Aga sub-subfamily. In terms of tissue distribution, expressed by the venom gland.

It is found in the secreted. Its function is as follows. Insecticidal neurotoxin that modulates the insect Nav channel (DmNaV1/tipE (para/tipE)) in a unique manner, with both the activation and inactivation processes being affected. The voltage dependence of activation is shifted toward more hyperpolarized potentials (analogous to site 4 toxins) and a non-inactivating persistent sodium current is induced (site 3-like action). Interestingly, both effects take place in a voltage-dependent manner, producing a bell-shaped curve between -80 and 0 mV. In vivo, induces an irreversible spastic paralysis when injected into insects. The polypeptide is U3-agatoxin-Ao1f (Agelena orientalis (Funnel-web spider)).